The chain runs to 84 residues: Fulditoxin (84 aa).

Residues 1 to 21 (MKTLLLTLVVVTIVCLDLGNS) form the signal peptide. Disulfide bonds link cysteine 24–cysteine 41, cysteine 34–cysteine 59, cysteine 63–cysteine 71, and cysteine 72–cysteine 77. A Zn(2+)-binding site is contributed by histidine 50.

It belongs to the three-finger toxin family. Short-chain subfamily. Homodimer; non-covalently linked. Is able to form a tetramer of dimers in the presence of 2 zinc ions. Expressed by the venom gland.

The protein localises to the secreted. Functionally, postsynaptic neurotoxin that produces potent, and completely reversible, postsynaptic neuromuscular blockade, as well as broad spectrum inhibition of human muscle and neuronal nicotinic acetylcholine receptors (nAChRs). Inhibition is potent or moderate, depending on the receptor (alpha-1-beta-1-delta-epsilon/CHRNA1-CHRNB1-CHRND-CHRNE (IC(50)=2.56 uM), alpha-4-beta-2/CHRNA4-CHRNB2 (IC(50)=1.8 uM), alpha-7/CHRNA7 (IC(50)=7 uM), and alpha-3-beta-2/CHRNA3-CHRNB2 (IC(50)=12.6 uM)). Acts as a competitive antagonist of ACh. Binds to chicken muscle-type nicotinic acetylcholine receptor (AChR) with high potency compared with the cloned human receptor. Unlike short-chain alpha-3FTxs that only bind to muscle nAChRs, this toxin utilizes dimerization to expand its pharmacological targets to block neuronal nAChRs. The protein is Fulditoxin of Micrurus fulvius (Eastern coral snake).